A 422-amino-acid polypeptide reads, in one-letter code: Autophagy-related protein 21 (422 aa).

6 WD repeats span residues 1–35 (MGLSRFNQDATCFVTSSEGNSVTIYNCDPFGKCFE), 102–153 (SFPH…ITGQ), 166–206 (MTSL…SKSV), 228–268 (VHKG…ESEL), 280–319 (NRPCNINQLTFNSDSTLLGCVGDSDTIHIFKLDSTSRLLS), and 374–414 (KNTK…GSCV). The L/FRRG motif motif lies at 276–280 (FRRGN).

Belongs to the WD repeat PROPPIN family.

It localises to the cytoplasm. The protein resides in the membrane. Its subcellular location is the vacuole membrane. Functionally, required for cytoplasm to vacuole transport (Cvt) vesicles formation and mitophagy. Involved in binding of phosphatidylethanolamine to ATG8 and in recruitment of ATG8 and ATG5 to the pre-autophagosomal structure. Protects ATG8 from ARG4-mediated cleavage. In Vanderwaltozyma polyspora (strain ATCC 22028 / DSM 70294 / BCRC 21397 / CBS 2163 / NBRC 10782 / NRRL Y-8283 / UCD 57-17) (Kluyveromyces polysporus), this protein is Autophagy-related protein 21 (ATG21).